An 811-amino-acid chain; its full sequence is MKLTPMMQQYMDIKSKYKDAILLFRLGDFYEAFFEDAEIVSKTLDLVLTHRQDAPMAGVPYHALNTYLKKLVQFGYKVAICDQVEDPSTAKGLVKREVTRIVTPGTVLEDDLLDQNSNNYLVAICRKSEYSVAGVDISTGESFVVSFKDFQSMIDFLGSVKVSQVLCEPDLRQDLEKNLADIMIESLADWHLDDALLEKDIAEVFKVSDIDHLELGSNLKVFGALVRYLRYTLMSPCTLVKPPRIIRDQMYVFLDPATIEHLSLVGGEKGKNLFDVLNHTKTSMGSRLLKNWILQPLRDLYEINKRLDKVQAFVEDSILLNEIREYLQAVRDIQRIANRINYGKASVKDLVALRSTLQVCPYIKEVLLTNEAFPEAAMVDCLHDICEILNDAIKEEPSSVIGEGKVIKEGYDEQLDQLRELVYHSQEFLNNFEQRERDRTGIPNLRVGYNSVFGYYIEITKSHLSKIPPNYVRKQTLVNAERFITDELKEFEQKMLTAKENLERREKEIYDEICASLSSKVGLIIELAEFLAQIDVLSTLAYVAIRYGYTKPSFSNDGKLLLRNSRHPVVERLVDTFVPNDLEMDRTKNFIILTGPNMSGKSTFIRQVALVSIMAQMGSFVPADEAILPVFDRIFAKMGIRDDIASGKSTFLIEMNEVAKIVYQATENSLILLDEVGRGTSTFDGISIAWAVSEYLQNQISCKCIFATHFTELTELAKMYDGIVNKTVQVIEEKNQVIFLHRVVDGIADRSYGIEVAGIAGLPGEIIQRAREVLDVIANKSELEDKLRVISSEKLKKLKKKKVHPNQAQLW.

595–602 (GPNMSGKS) serves as a coordination point for ATP.

Belongs to the DNA mismatch repair MutS family.

In terms of biological role, this protein is involved in the repair of mismatches in DNA. It is possible that it carries out the mismatch recognition step. This protein has a weak ATPase activity. In Pseudothermotoga lettingae (strain ATCC BAA-301 / DSM 14385 / NBRC 107922 / TMO) (Thermotoga lettingae), this protein is DNA mismatch repair protein MutS.